A 377-amino-acid polypeptide reads, in one-letter code: DNA replication and repair protein RecF (377 aa).

Position 30–37 (30–37 (GLNGSGKT)) interacts with ATP.

This sequence belongs to the RecF family.

Its subcellular location is the cytoplasm. Its function is as follows. The RecF protein is involved in DNA metabolism; it is required for DNA replication and normal SOS inducibility. RecF binds preferentially to single-stranded, linear DNA. It also seems to bind ATP. In Cytophaga hutchinsonii (strain ATCC 33406 / DSM 1761 / CIP 103989 / NBRC 15051 / NCIMB 9469 / D465), this protein is DNA replication and repair protein RecF.